A 352-amino-acid polypeptide reads, in one-letter code: DNA polymerase IV (352 aa).

The 182-residue stretch at 4–185 folds into the UmuC domain; sequence IIHVDMDCFF…LPLSKIPGVG (182 aa). Mg(2+) is bound by residues Asp-8 and Asp-103. Glu-104 is an active-site residue.

It belongs to the DNA polymerase type-Y family. As to quaternary structure, monomer. It depends on Mg(2+) as a cofactor.

It is found in the cytoplasm. The enzyme catalyses DNA(n) + a 2'-deoxyribonucleoside 5'-triphosphate = DNA(n+1) + diphosphate. Its function is as follows. Poorly processive, error-prone DNA polymerase involved in untargeted mutagenesis. Copies undamaged DNA at stalled replication forks, which arise in vivo from mismatched or misaligned primer ends. These misaligned primers can be extended by PolIV. Exhibits no 3'-5' exonuclease (proofreading) activity. May be involved in translesional synthesis, in conjunction with the beta clamp from PolIII. This Enterobacter sp. (strain 638) protein is DNA polymerase IV.